Reading from the N-terminus, the 494-residue chain is Aspartyl/glutamyl-tRNA(Asn/Gln) amidotransferase subunit B (494 aa).

This sequence belongs to the GatB/GatE family. GatB subfamily. As to quaternary structure, heterotrimer of A, B and C subunits.

The catalysed reaction is L-glutamyl-tRNA(Gln) + L-glutamine + ATP + H2O = L-glutaminyl-tRNA(Gln) + L-glutamate + ADP + phosphate + H(+). It carries out the reaction L-aspartyl-tRNA(Asn) + L-glutamine + ATP + H2O = L-asparaginyl-tRNA(Asn) + L-glutamate + ADP + phosphate + 2 H(+). Functionally, allows the formation of correctly charged Asn-tRNA(Asn) or Gln-tRNA(Gln) through the transamidation of misacylated Asp-tRNA(Asn) or Glu-tRNA(Gln) in organisms which lack either or both of asparaginyl-tRNA or glutaminyl-tRNA synthetases. The reaction takes place in the presence of glutamine and ATP through an activated phospho-Asp-tRNA(Asn) or phospho-Glu-tRNA(Gln). This is Aspartyl/glutamyl-tRNA(Asn/Gln) amidotransferase subunit B from Rhodopseudomonas palustris (strain HaA2).